Reading from the N-terminus, the 363-residue chain is Dihydroorotate dehydrogenase (quinone) (363 aa).

FMN-binding positions include 77–81 and Thr-101; that span reads AGMDK. Lys-81 contributes to the substrate binding site. Position 126–130 (126–130) interacts with substrate; it reads NRMGF. The FMN site is built by Ser-155 and Asn-188. Asn-188 provides a ligand contact to substrate. Catalysis depends on Ser-191, which acts as the Nucleophile. A substrate-binding site is contributed by Asn-193. 2 residues coordinate FMN: Lys-234 and Thr-262. 263 to 264 provides a ligand contact to substrate; the sequence is NT. Residues Gly-287, Gly-316, and 337-338 contribute to the FMN site; that span reads YT.

This sequence belongs to the dihydroorotate dehydrogenase family. Type 2 subfamily. As to quaternary structure, monomer. The cofactor is FMN.

Its subcellular location is the cell membrane. The enzyme catalyses (S)-dihydroorotate + a quinone = orotate + a quinol. The protein operates within pyrimidine metabolism; UMP biosynthesis via de novo pathway; orotate from (S)-dihydroorotate (quinone route): step 1/1. Functionally, catalyzes the conversion of dihydroorotate to orotate with quinone as electron acceptor. The sequence is that of Dihydroorotate dehydrogenase (quinone) from Chloroflexus aurantiacus (strain ATCC 29366 / DSM 635 / J-10-fl).